The sequence spans 155 residues: DNA gyrase inhibitor (155 aa).

Belongs to the DNA gyrase inhibitor family. Interacts with DNA gyrase.

The protein resides in the cytoplasm. Its function is as follows. Inhibits the supercoiling activity of DNA gyrase. Acts by inhibiting DNA gyrase at an early step, prior to (or at the step of) binding of DNA by the gyrase. It protects cells against toxins that target DNA gyrase, by inhibiting activity of these toxins and reducing the formation of lethal double-strand breaks in the cell. This is DNA gyrase inhibitor from Erwinia billingiae (strain Eb661).